We begin with the raw amino-acid sequence, 130 residues long: Classical arabinogalactan protein 7 (130 aa).

Positions 1 to 21 (MNSKIIEAFFIVALFTTSCLA) are cleaved as a signal peptide. Q22 is modified (pyrrolidone carboxylic acid). The segment at 22–108 (QAPAPSPTTT…DASAPPPNAA (87 aa)) is disordered. 4-hydroxyproline is present on residues P24, P26, P28, P35, and P36. O-linked (Ara...) hydroxyproline glycosylation is found at P24, P26, P28, P35, and P36. Residues 33-68 (TPPPVATPPPAATPAPTTTPPPAVSPAPTSSPPSSA) show a composition bias toward pro residues. N106 is lipidated: GPI-anchor amidated asparagine. Residues 107-130 (AALTNKAFVVGSLVAAIIYAVVLA) constitute a propeptide, removed in mature form.

It belongs to the classical AGP family. Post-translationally, O-glycosylated on hydroxyprolines; noncontiguous hydroxylproline residues are glycosylated with arabinogalactan.

Its subcellular location is the cell membrane. In terms of biological role, proteoglycan that seems to be implicated in diverse developmental roles such as differentiation, cell-cell recognition, embryogenesis and programmed cell death. This chain is Classical arabinogalactan protein 7 (AGP7), found in Arabidopsis thaliana (Mouse-ear cress).